We begin with the raw amino-acid sequence, 468 residues long: uncharacterized protein (468 aa).

The first 19 residues, 1 to 19 (MRVLSVLLVALTVAGSAYS), serve as a signal peptide directing secretion. N-linked (GlcNAc...) asparagine glycans are attached at residues asparagine 86 and asparagine 334. The disordered stretch occupies residues 401–421 (NPSTNLPETSPPTEQPTAPPA). Positions 409–421 (TSPPTEQPTAPPA) are enriched in pro residues. Asparagine 435 is a glycosylation site (N-linked (GlcNAc...) asparagine). A lipid anchor (GPI-like-anchor amidated asparagine) is attached at asparagine 444. Positions 445-468 (SASSIEMSKLVVAILSLFILAFFH) are cleaved as a propeptide — removed in mature form.

It is found in the cell membrane. This is an uncharacterized protein from Dictyostelium discoideum (Social amoeba).